The following is a 128-amino-acid chain: Sulfurtransferase TusD (128 aa).

Cys78 acts as the Cysteine persulfide intermediate in catalysis.

Belongs to the DsrE/TusD family. As to quaternary structure, heterohexamer, formed by a dimer of trimers. The hexameric TusBCD complex contains 2 copies each of TusB, TusC and TusD. The TusBCD complex interacts with TusE.

It is found in the cytoplasm. Part of a sulfur-relay system required for 2-thiolation of 5-methylaminomethyl-2-thiouridine (mnm(5)s(2)U) at tRNA wobble positions. Accepts sulfur from TusA and transfers it in turn to TusE. This chain is Sulfurtransferase TusD, found in Klebsiella pneumoniae subsp. pneumoniae (strain ATCC 700721 / MGH 78578).